A 356-amino-acid chain; its full sequence is Tungsten-containing aldehyde ferredoxin oxidoreductase cofactor-modifying protein (356 aa).

Positions 1-214 (MKYLYLEITS…PIVNELYKIA (214 aa)) constitute a Radical SAM core domain. [4Fe-4S] cluster-binding residues include C12, C16, and C19.

This sequence belongs to the radical SAM superfamily. [4Fe-4S] cluster is required as a cofactor.

Involved in the biosynthesis of a molybdopterin-based tungsten cofactor. This chain is Tungsten-containing aldehyde ferredoxin oxidoreductase cofactor-modifying protein (cmo), found in Pyrococcus furiosus (strain ATCC 43587 / DSM 3638 / JCM 8422 / Vc1).